Consider the following 249-residue polypeptide: Coproheme decarboxylase (249 aa).

Residues R131, Y145–K149, H172, Q185, and S223 contribute to the Fe-coproporphyrin III site. The active site involves Y145.

The protein belongs to the ChdC family. Type 1 subfamily. Fe-coproporphyrin III serves as cofactor.

The enzyme catalyses Fe-coproporphyrin III + 2 H2O2 + 2 H(+) = heme b + 2 CO2 + 4 H2O. It carries out the reaction Fe-coproporphyrin III + H2O2 + H(+) = harderoheme III + CO2 + 2 H2O. The catalysed reaction is harderoheme III + H2O2 + H(+) = heme b + CO2 + 2 H2O. It functions in the pathway porphyrin-containing compound metabolism; protoheme biosynthesis. Functionally, involved in coproporphyrin-dependent heme b biosynthesis. Catalyzes the decarboxylation of Fe-coproporphyrin III (coproheme) to heme b (protoheme IX), the last step of the pathway. The reaction occurs in a stepwise manner with a three-propionate intermediate. This Halalkalibacterium halodurans (strain ATCC BAA-125 / DSM 18197 / FERM 7344 / JCM 9153 / C-125) (Bacillus halodurans) protein is Coproheme decarboxylase.